Here is a 464-residue protein sequence, read N- to C-terminus: Secretion-regulating guanine nucleotide exchange factor (464 aa).

RCC1 repeat units follow at residues 14–66, 68–118, 119–170, 172–229, 230–282, 283–349, and 350–401; these read AAAL…VVTD, GSLF…ILTE, NGQV…AATA, GTVF…SLTD, AGEL…AQTV, TGKV…LAVI, and GGVC…ALCQ. Basic and acidic residues predominate over residues 301-313; the sequence is VETREGWESEKQD. The interval 301–323 is disordered; sequence VETREGWESEKQDPSLPGSGPQK. The segment at 411-464 is disordered; the sequence is HPSVTSPSPDATKEARSQEAMEQERNQKERHAETSPQAQSDRFRNGGLVAETLE. Over residues 421–443 the composition is skewed to basic and acidic residues; the sequence is ATKEARSQEAMEQERNQKERHAE. Phosphoserine is present on Ser-427.

Interacts with SEC5. The interaction occurs only in the presence of magnesium or manganese and is stimulated by dCTP or GTP.

It is found in the cytoplasm. The protein localises to the nucleus. In terms of biological role, probable guanine nucleotide exchange factor (GEF), which may be involved in the secretion process. In Bos taurus (Bovine), this protein is Secretion-regulating guanine nucleotide exchange factor (SERGEF).